The primary structure comprises 312 residues: Pyrimidine-specific ribonucleoside hydrolase RihA (312 aa).

Residue His240 is part of the active site.

It belongs to the IUNH family. RihA subfamily.

Hydrolyzes cytidine or uridine to ribose and cytosine or uracil, respectively. In Shewanella woodyi (strain ATCC 51908 / MS32), this protein is Pyrimidine-specific ribonucleoside hydrolase RihA.